The following is a 106-amino-acid chain: UPF0145 protein Tpet_0165 (106 aa).

The protein belongs to the UPF0145 family.

This chain is UPF0145 protein Tpet_0165, found in Thermotoga petrophila (strain ATCC BAA-488 / DSM 13995 / JCM 10881 / RKU-1).